The following is a 233-amino-acid chain: Large ribosomal subunit protein uL1 (233 aa).

The protein belongs to the universal ribosomal protein uL1 family. In terms of assembly, part of the 50S ribosomal subunit.

Binds directly to 23S rRNA. The L1 stalk is quite mobile in the ribosome, and is involved in E site tRNA release. Functionally, protein L1 is also a translational repressor protein, it controls the translation of the L11 operon by binding to its mRNA. In Pseudoalteromonas atlantica (strain T6c / ATCC BAA-1087), this protein is Large ribosomal subunit protein uL1.